Reading from the N-terminus, the 194-residue chain is Peptidyl-tRNA hydrolase (194 aa).

Residue Y16 participates in tRNA binding. H21 acts as the Proton acceptor in catalysis. TRNA contacts are provided by F67, N69, and N115.

It belongs to the PTH family. In terms of assembly, monomer.

The protein localises to the cytoplasm. It catalyses the reaction an N-acyl-L-alpha-aminoacyl-tRNA + H2O = an N-acyl-L-amino acid + a tRNA + H(+). Its function is as follows. Hydrolyzes ribosome-free peptidyl-tRNAs (with 1 or more amino acids incorporated), which drop off the ribosome during protein synthesis, or as a result of ribosome stalling. In terms of biological role, catalyzes the release of premature peptidyl moieties from peptidyl-tRNA molecules trapped in stalled 50S ribosomal subunits, and thus maintains levels of free tRNAs and 50S ribosomes. The sequence is that of Peptidyl-tRNA hydrolase from Citrobacter koseri (strain ATCC BAA-895 / CDC 4225-83 / SGSC4696).